A 314-amino-acid polypeptide reads, in one-letter code: Methenyltetrahydromethanopterin cyclohydrolase (314 aa).

The protein belongs to the MCH family.

The protein localises to the cytoplasm. It carries out the reaction 5,10-methenyl-5,6,7,8-tetrahydromethanopterin + H2O = N(5)-formyl-5,6,7,8-tetrahydromethanopterin + H(+). It functions in the pathway one-carbon metabolism; methanogenesis from CO(2); 5,10-methenyl-5,6,7,8-tetrahydromethanopterin from CO(2): step 3/3. In terms of biological role, catalyzes the reversible interconversion of 5-formyl-H(4)MPT to methenyl-H(4)MPT(+). In Methanoregula boonei (strain DSM 21154 / JCM 14090 / 6A8), this protein is Methenyltetrahydromethanopterin cyclohydrolase.